Here is a 485-residue protein sequence, read N- to C-terminus: Cys-Gly metallodipeptidase DUG1 (485 aa).

His109 provides a ligand contact to Zn(2+). Asp111 is a catalytic residue. Zn(2+) is bound at residue Asp144. Glu178 acts as the Proton acceptor in catalysis. Residues Glu179, Asp207, and His457 each contribute to the Zn(2+) site.

The protein belongs to the peptidase M20A family. Homodimer. Component of the GSH degradosomal complex. Zn(2+) serves as cofactor. Mn(2+) is required as a cofactor.

It is found in the cytoplasm. In terms of biological role, catalytic component of the GSH degradosomal complex involved in the degradation of glutathione (GSH) and other peptides containing a gamma-glu-X bond. Also functions as a dipeptidase with high specificity for Cys-Gly and no activity toward tri- or tetrapeptides. The protein is Cys-Gly metallodipeptidase DUG1 (DUG1) of Candida albicans (strain SC5314 / ATCC MYA-2876) (Yeast).